Reading from the N-terminus, the 558-residue chain is MTSSEEVVEVTVVKAPEAGGGKLSRRKIRKKDAGVDGLVKWERFLPKIALRVLLVEADDSTRQIIAALLRKCSYRVAAVPDGLKAWEMLKGKPESVDLILTEVDLPSISGYALLTLIMEHDICKNIPVIMMSTQDSVNTVYKCMLKGAADYLVKPLRRNELRNLWQHVWRRQTSLAPDSFPWNESVGQQKAEGASANNSNGKRDDHVVSGNGGDAQSSCTRPEMEGESADVEVSARDAVQMECAKSQFNETRLLANELQSKQAEAIDFMGASFRRTGRRNREESVAQYESRIELDLSLRRPNASENQSSGDRPSLHPSSASAFTRYVHRPLQTQCSASPVVTDQRKNVAASQDDNIVLMNQYNTSEPPPNAPRRNDTSFYTGADSPGPPFSNQLNSWPGQSSYPTPTPINNIQFRDPNTAYTSAMAPASLSPSPSSVSPHEYSSMFHPFNSKPEGLQDRDCSMDVDERRYVSSATEHSAIGNHIDQLIEKKNEDGYSLSVGKIQQSLQREAALTKFRMKRKDRCYEKKVRYESRKKLAEQRPRIKGQFVRQVQSTQAP.

One can recognise a Response regulatory domain in the interval 51 to 169 (RVLLVEADDS…ELRNLWQHVW (119 aa)). Residues 180 to 233 (FPWNESVGQQKAEGASANNSNGKRDDHVVSGNGGDAQSSCTRPEMEGESADVEV) are disordered. Positions 240 to 260 (QMECAKSQFNETRLLANELQS) form a coiled coil. Disordered regions lie at residues 297–319 (SLRRPNASENQSSGDRPSLHPSS) and 535–558 (KKLAEQRPRIKGQFVRQVQSTQAP). Residues 303-319 (ASENQSSGDRPSLHPSS) are compositionally biased toward polar residues. The CCT domain occupies 509–551 (REAALTKFRMKRKDRCYEKKVRYESRKKLAEQRPRIKGQFVRQ).

Belongs to the ARR-like family. Interacts with ADO1 and ADO2. Interacts with SPY (via N-terminus). In terms of processing, phosphorylation varies throughout the diurnal cycle and enhances ADO1 binding. Post-translationally, O-fucosylated by SPY. O-fucosylation promotes APRR5 proteolysis.

It localises to the nucleus. Functionally, transcriptional repressor of CCA1 and LHY, thereby controlling photoperiodic flowering response. Involved in the positive and negative feedback loops of the circadian clock. With RVE8, forms a negative feedback loop of the circadian clock. Expression of several members of the ARR-like family is controlled by circadian rhythm. Proteolytic substrate of the E3 ubiquitin ligase SCF(ADO1) complex. APRR9, APRR7, and APRR5 coordinately act on the upstream region of the target genes to repress their expression from noon until midnight. The particular coordinated sequential expression of APRR9, APRR7, APRR5, APRR3 and APPR1 result to circadian waves that may be at the basis of the endogenous circadian clock. Negative regulator of shade avoidance response. Involved in the inhibition of leaf expansion in shade avoidance response. The polypeptide is Two-component response regulator-like APRR5 (APRR5) (Arabidopsis thaliana (Mouse-ear cress)).